Reading from the N-terminus, the 615-residue chain is Dihydroxy-acid dehydratase (615 aa).

Residue D81 coordinates Mg(2+). C122 serves as a coordination point for [2Fe-2S] cluster. Residues D123 and K124 each contribute to the Mg(2+) site. N6-carboxylysine is present on K124. C193 contacts [2Fe-2S] cluster. E489 lines the Mg(2+) pocket. The active-site Proton acceptor is S515.

The protein belongs to the IlvD/Edd family. Homodimer. It depends on [2Fe-2S] cluster as a cofactor. Mg(2+) is required as a cofactor.

The catalysed reaction is (2R)-2,3-dihydroxy-3-methylbutanoate = 3-methyl-2-oxobutanoate + H2O. The enzyme catalyses (2R,3R)-2,3-dihydroxy-3-methylpentanoate = (S)-3-methyl-2-oxopentanoate + H2O. It functions in the pathway amino-acid biosynthesis; L-isoleucine biosynthesis; L-isoleucine from 2-oxobutanoate: step 3/4. The protein operates within amino-acid biosynthesis; L-valine biosynthesis; L-valine from pyruvate: step 3/4. Functionally, functions in the biosynthesis of branched-chain amino acids. Catalyzes the dehydration of (2R,3R)-2,3-dihydroxy-3-methylpentanoate (2,3-dihydroxy-3-methylvalerate) into 2-oxo-3-methylpentanoate (2-oxo-3-methylvalerate) and of (2R)-2,3-dihydroxy-3-methylbutanoate (2,3-dihydroxyisovalerate) into 2-oxo-3-methylbutanoate (2-oxoisovalerate), the penultimate precursor to L-isoleucine and L-valine, respectively. The polypeptide is Dihydroxy-acid dehydratase (Pseudomonas syringae pv. syringae (strain B728a)).